The primary structure comprises 596 residues: Transketolase-like protein 1 (596 aa).

Position 46 (His-46) interacts with substrate. Thiamine diphosphate is bound by residues Ser-49 and 94-96 (GWL). Asp-126 serves as a coordination point for Mg(2+). Thiamine diphosphate-binding residues include Gly-127 and Asn-156. Residues Asn-156 and Leu-158 each coordinate Mg(2+). Thiamine diphosphate is bound by residues Lys-218 and His-232. Positions 232, 292, and 319 each coordinate substrate. Thiamine diphosphate-binding residues include Glu-340 and Phe-366. Glu-340 serves as the catalytic Proton donor. Residues His-390 and Asp-398 each coordinate substrate. Gln-402 is a binding site for thiamine diphosphate. Position 448 (Arg-448) interacts with substrate.

This sequence belongs to the transketolase family. Homodimer. The cofactor is Mg(2+). Ca(2+) serves as cofactor. It depends on Mn(2+) as a cofactor. Requires Co(2+) as cofactor. Thiamine diphosphate is required as a cofactor.

The protein resides in the cytoplasm. The catalysed reaction is D-sedoheptulose 7-phosphate + D-glyceraldehyde 3-phosphate = aldehydo-D-ribose 5-phosphate + D-xylulose 5-phosphate. Catalyzes the transfer of a two-carbon ketol group from a ketose donor to an aldose acceptor, via a covalent intermediate with the cofactor thiamine pyrophosphate. This chain is Transketolase-like protein 1 (TKTL1), found in Macaca fascicularis (Crab-eating macaque).